A 249-amino-acid chain; its full sequence is Phosphomannomutase 1 (249 aa).

Asp12 serves as the catalytic Nucleophile. Residues Asp12 and Asp14 each coordinate Mg(2+). The active-site Proton donor/acceptor is the Asp14. Alpha-D-mannose 1-phosphate contacts are provided by Arg21, Arg123, Arg134, Arg141, Ser179, and Asp181. Mg(2+) contacts are provided by Asp209, Asp223, and Thr227.

It belongs to the eukaryotic PMM family. As to quaternary structure, homodimer.

Its subcellular location is the cytoplasm. It carries out the reaction alpha-D-mannose 1-phosphate = D-mannose 6-phosphate. It participates in nucleotide-sugar biosynthesis; GDP-alpha-D-mannose biosynthesis; alpha-D-mannose 1-phosphate from D-fructose 6-phosphate: step 2/2. Involved in the synthesis of the GDP-mannose and dolichol-phosphate-mannose required for a number of critical mannosyl transfer reactions. The protein is Phosphomannomutase 1 (pmmA) of Dictyostelium discoideum (Social amoeba).